We begin with the raw amino-acid sequence, 330 residues long: o-succinylbenzoate synthase (330 aa).

The active-site Proton donor is the K130. Mg(2+) is bound by residues D155, E184, and D206. The Proton acceptor role is filled by K228.

The protein belongs to the mandelate racemase/muconate lactonizing enzyme family. MenC type 1 subfamily. In terms of assembly, monomer. Requires a divalent metal cation as cofactor.

The enzyme catalyses (1R,6R)-6-hydroxy-2-succinyl-cyclohexa-2,4-diene-1-carboxylate = 2-succinylbenzoate + H2O. Its pathway is quinol/quinone metabolism; 1,4-dihydroxy-2-naphthoate biosynthesis; 1,4-dihydroxy-2-naphthoate from chorismate: step 4/7. It participates in cofactor biosynthesis; phylloquinone biosynthesis. Its function is as follows. Converts 2-succinyl-6-hydroxy-2,4-cyclohexadiene-1-carboxylate (SHCHC) to 2-succinylbenzoate (OSB). Does not show N-succinylamino acid racemase (NSAR) activity with N-succinyl-L-phenylglycine as substrate. This is o-succinylbenzoate synthase from Bdellovibrio bacteriovorus (strain ATCC 15356 / DSM 50701 / NCIMB 9529 / HD100).